The primary structure comprises 176 residues: Large ribosomal subunit protein uL10 (176 aa).

It belongs to the universal ribosomal protein uL10 family. As to quaternary structure, part of the ribosomal stalk of the 50S ribosomal subunit. The N-terminus interacts with L11 and the large rRNA to form the base of the stalk. The C-terminus forms an elongated spine to which L12 dimers bind in a sequential fashion forming a multimeric L10(L12)X complex.

Forms part of the ribosomal stalk, playing a central role in the interaction of the ribosome with GTP-bound translation factors. This is Large ribosomal subunit protein uL10 from Mycobacteroides abscessus (strain ATCC 19977 / DSM 44196 / CCUG 20993 / CIP 104536 / JCM 13569 / NCTC 13031 / TMC 1543 / L948) (Mycobacterium abscessus).